A 431-amino-acid chain; its full sequence is Divalent metal cation transporter MntH (431 aa).

The next 12 helical transmembrane spans lie at 30–50, 63–83, 106–126, 137–159, 169–189, 209–229, 257–277, 287–307, 309–329, 341–361, 367–387, and 405–425; these read WSWTAFFGPALIAAVAYIDPG, GYTLLWVVLAANLMAMLIQTL, PLVWCYWVQAEIVAIATDLAE, LFGLSLMEGALLTGTITYLALHL, ILIGAMILAVAGGFILELVLS, YALYLAAGILGATVMPHVIYL, VILGMAIAGLVNLSMLAMAAA, VATISDSYLLLAPVVGQVTAS, VFGLALLLAGLSSSIVGTLSG, IPLWLRRLVTMLPALAVIMLG, ALVASQVILSFGIPFALVPLL, and VTGVGTVVCTLIVALNVYVLF.

Belongs to the NRAMP family.

Its subcellular location is the cell inner membrane. In terms of biological role, h(+)-stimulated, divalent metal cation uptake system. In Chromohalobacter salexigens (strain ATCC BAA-138 / DSM 3043 / CIP 106854 / NCIMB 13768 / 1H11), this protein is Divalent metal cation transporter MntH.